The sequence spans 1013 residues: AP-2 complex subunit alpha-2 (1013 aa).

HEAT repeat units lie at residues 254–289, 354–391, 393–430, and 521–565; these read AMRA…VVKN, DIIK…VSNA, DIVE…DLSW, and TVST…CIDV. The disordered stretch occupies residues 652 to 676; sequence STDPESVARSLSHPNGTLSNIDPQT. Polar residues predominate over residues 663–675; sequence SHPNGTLSNIDPQ. The 100-residue stretch at 742-841 folds into the GAE domain; the sequence is ALCLKDSGVL…LDFSYKFGTN (100 aa). The tract at residues 760–1013 is required for AP180 binding; sequence GIKAEWRGHH…DPGAMLAGLL (254 aa).

It belongs to the adaptor complexes large subunit family. In terms of assembly, adaptor protein complex 2 (AP-2) is a heterotetramer composed of two large adaptins (alpha-type and beta-type subunits), a medium adaptin (mu-type subunit) and a small adaptin (sigma-type subunit). Interacts with AP180.

The protein resides in the membrane. Its subcellular location is the coated pit. Functionally, subunit of the adaptor protein complex 2 (AP-2). Adaptor protein complexes function in protein transport via transport vesicles in different membrane traffic pathways. Adaptor protein complexes are vesicle coat components and appear to be involved in cargo selection and vesicle formation. AP-2 is involved in clathrin-dependent endocytosis in which cargo proteins are incorporated into vesicles surrounded by clathrin (clathrin-coated vesicles, CCVs) which are destined for fusion with the early endosome. The complex binds polyphosphoinositides. The polypeptide is AP-2 complex subunit alpha-2 (ALPHAC-AD) (Arabidopsis thaliana (Mouse-ear cress)).